The chain runs to 134 residues: Replication enhancer protein (134 aa).

It belongs to the geminiviridae replication enhancer protein family. Homooligomer. Interacts with the replication-associated protein (REP). Interacts with host proliferating cell nuclear antigen (PCNA). Interacts with host retinoblastoma-related protein 1 (RBR1), and may thereby deregulate the host cell cycle. Oligomerization and interaction with PCNA are necessary for optimal replication enhancement.

In terms of biological role, increases viral DNA accumulation. Enhances infectivity and symptom expression. The polypeptide is Replication enhancer protein (Nicotiana tabacum (Common tobacco)).